The primary structure comprises 185 residues: Elongation factor P (185 aa).

Belongs to the elongation factor P family.

The protein resides in the cytoplasm. It functions in the pathway protein biosynthesis; polypeptide chain elongation. Functionally, involved in peptide bond synthesis. Stimulates efficient translation and peptide-bond synthesis on native or reconstituted 70S ribosomes in vitro. Probably functions indirectly by altering the affinity of the ribosome for aminoacyl-tRNA, thus increasing their reactivity as acceptors for peptidyl transferase. The sequence is that of Elongation factor P from Bordetella bronchiseptica (strain ATCC BAA-588 / NCTC 13252 / RB50) (Alcaligenes bronchisepticus).